The sequence spans 178 residues: ATP synthase subunit delta (178 aa).

This sequence belongs to the ATPase delta chain family. As to quaternary structure, F-type ATPases have 2 components, F(1) - the catalytic core - and F(0) - the membrane proton channel. F(1) has five subunits: alpha(3), beta(3), gamma(1), delta(1), epsilon(1). F(0) has three main subunits: a(1), b(2) and c(10-14). The alpha and beta chains form an alternating ring which encloses part of the gamma chain. F(1) is attached to F(0) by a central stalk formed by the gamma and epsilon chains, while a peripheral stalk is formed by the delta and b chains.

It localises to the cell membrane. Functionally, f(1)F(0) ATP synthase produces ATP from ADP in the presence of a proton or sodium gradient. F-type ATPases consist of two structural domains, F(1) containing the extramembraneous catalytic core and F(0) containing the membrane proton channel, linked together by a central stalk and a peripheral stalk. During catalysis, ATP synthesis in the catalytic domain of F(1) is coupled via a rotary mechanism of the central stalk subunits to proton translocation. This protein is part of the stalk that links CF(0) to CF(1). It either transmits conformational changes from CF(0) to CF(1) or is implicated in proton conduction. The sequence is that of ATP synthase subunit delta from Streptococcus equi subsp. zooepidemicus (strain H70).